Reading from the N-terminus, the 1320-residue chain is Centrosomin (1320 aa).

A disordered region spans residues 20–41 (ASFDVPRPPGGGNSPLPSQGRS). Residues 97–516 (RKTVDVKMEL…SSQEKEIKKL (420 aa)) are a coiled coil. The span at 517 to 530 (NQENEQSANKENDC) shows a compositional bias: basic and acidic residues. The interval 517–554 (NQENEQSANKENDCAKTVISPSSSGRSMSDNEASSQEM) is disordered. The span at 535–554 (ISPSSSGRSMSDNEASSQEM) shows a compositional bias: polar residues. S545 carries the phosphoserine modification. Coiled coils occupy residues 626–654 (EADLQQSFTEAEYMRALERNKLLQRKVDV) and 712–983 (NSLL…LKLA). Positions 644 to 656 (RNKLLQRKVDVLF) match the Nuclear localization signal motif. T782 carries the phosphothreonine modification. S785 bears the Phosphoserine mark. The span at 810–823 (KKELEKRRSSEGQR) shows a compositional bias: basic and acidic residues. 2 disordered regions span residues 810 to 849 (KKELEKRRSSEGQRKERRSLPLPSQQFDNQSESEAWSEPD) and 863 to 893 (SNSLAAPEQAISESESEGRTCATRQDRNRNS). The span at 831–843 (LPSQQFDNQSESE) shows a compositional bias: polar residues. Residues S874, S876, S878, S1191, S1234, S1237, and S1239 each carry the phosphoserine modification. The interval 1220-1249 (VEMKTEGSASPKAKSEESTSPDSKSNVATG) is disordered. The segment covering 1237-1247 (STSPDSKSNVA) has biased composition (polar residues).

Monomer. Developing visceral mesoderm of the midgut, the central and peripheral nervous system, and developing gonads. Isoform J: Expressed in ovaries, testis and embryos. Isoform A: Expressed in testis only.

The protein localises to the cytoplasm. It is found in the cytoskeleton. It localises to the microtubule organizing center. The protein resides in the centrosome. Its subcellular location is the flagellum basal body. The protein localises to the perinuclear region. Its function is as follows. Core component of the centrosome throughout spermatogenesis. May participate in mitotic spindle assembly and the mechanics of morphogenesis through an interaction with microtubules, either directly or indirectly. Is a target of several homeotic genes. This Drosophila melanogaster (Fruit fly) protein is Centrosomin (cnn).